A 249-amino-acid polypeptide reads, in one-letter code: Exosome complex component Rrp4 (249 aa).

In terms of domain architecture, S1 motif spans 72 to 143; that stretch reads GDTIIGLVED…RTISPVLTVK (72 aa). Positions 151–213 constitute a KH domain; sequence PLGTVMDIMP…EALIEAINII (63 aa).

It belongs to the RRP4 family. Component of the archaeal exosome complex. Forms a trimer of Rrp4 and/or Csl4 subunits. The trimer associates with a hexameric ring-like arrangement composed of 3 Rrp41-Rrp42 heterodimers.

It localises to the cytoplasm. In terms of biological role, non-catalytic component of the exosome, which is a complex involved in RNA degradation. Increases the RNA binding and the efficiency of RNA degradation. Confers strong poly(A) specificity to the exosome. The polypeptide is Exosome complex component Rrp4 (Sulfolobus acidocaldarius (strain ATCC 33909 / DSM 639 / JCM 8929 / NBRC 15157 / NCIMB 11770)).